Reading from the N-terminus, the 633-residue chain is Histone-lysine N-methyltransferase Su(var)3-9 (633 aa).

In terms of domain architecture, Chromo spans 213-271 (YIVEKIESVEVVQFQPVFFVKWLGYDVSANTWESYVNLSDCAEMEKFVERHLQLHQHYI). The Pre-SET domain occupies 407–472 (VGCMCRHQSG…SCTNRVVQNG (66 aa)). The Zn(2+) site is built by Cys409, Cys411, Cys419, Cys425, Cys426, Cys454, Cys458, Cys460, and Cys464. The SET domain maps to 475–601 (HPLVLFKTSN…AGEELSFDYI (127 aa)). S-adenosyl-L-methionine is bound by residues 486 to 488 (SGW), Tyr529, and 558 to 559 (NH). 4 residues coordinate Zn(2+): Cys561, Cys621, Cys623, and Cys628. The Post-SET domain maps to 617–633 (ARVQCRCGAANCRKVLF).

This sequence belongs to the class V-like SAM-binding methyltransferase superfamily. Histone-lysine methyltransferase family. Suvar3-9 subfamily. Interacts with Su(var)205 and Su(var)3-7. Probably associates with HDAC1/Rpd3.

It is found in the nucleus. It localises to the chromosome. The protein localises to the centromere. The enzyme catalyses L-lysyl(9)-[histone H3] + 3 S-adenosyl-L-methionine = N(6),N(6),N(6)-trimethyl-L-lysyl(9)-[histone H3] + 3 S-adenosyl-L-homocysteine + 3 H(+). Histone methyltransferase that specifically trimethylates 'Lys-9' of histone H3 using monomethylated H3 'Lys-9' as substrate. H3 'Lys-9' trimethylation represents a specific tag for epigenetic transcriptional repression by recruiting Su(var)205/HP1 to methylated histones. Mainly functions in heterochromatin regions, thereby playing a central role in the establishment of constitutive heterochromatin at pericentric regions. Involved in heterochromatic gene silencing including the modification of position-effect-variegation. This Drosophila pseudoobscura pseudoobscura (Fruit fly) protein is Histone-lysine N-methyltransferase Su(var)3-9 (Su(var)3-9).